Consider the following 156-residue polypeptide: FAD synthase (156 aa).

ATP contacts are provided by residues 9-10 (TF), 14-17 (HPGH), Asn-92, and His-119.

Belongs to the archaeal FAD synthase family. As to quaternary structure, homodimer. The cofactor is a divalent metal cation.

It carries out the reaction FMN + ATP + H(+) = FAD + diphosphate. It participates in cofactor biosynthesis; FAD biosynthesis; FAD from FMN: step 1/1. Catalyzes the transfer of the AMP portion of ATP to flavin mononucleotide (FMN) to produce flavin adenine dinucleotide (FAD) coenzyme. The protein is FAD synthase of Methanospirillum hungatei JF-1 (strain ATCC 27890 / DSM 864 / NBRC 100397 / JF-1).